Reading from the N-terminus, the 430-residue chain is MIOREX complex component 4 (430 aa).

The N-terminal 27 residues, 1-27, are a transit peptide targeting the mitochondrion; sequence MTVLYTSASLKKMKCLAFNMGMNCVRT. Residues 403–420 form a helical membrane-spanning segment; it reads FLISLSALLASFFAYYRY.

As to quaternary structure, associates with the mitochondrial ribosome.

It is found in the mitochondrion. Its subcellular location is the mitochondrion membrane. Its function is as follows. Component of MIOREX complexes, large expressome-like assemblies of ribosomes with factors involved in all the steps of post-transcriptional gene expression. The polypeptide is MIOREX complex component 4 (Saccharomyces cerevisiae (strain ATCC 204508 / S288c) (Baker's yeast)).